The sequence spans 387 residues: Colicin-N (387 aa).

Polar residues predominate over residues 1–11; that stretch reads MGSNGADNAHN. The disordered stretch occupies residues 1 to 106; sequence MGSNGADNAH…ITITPDNSKP (106 aa). Gly residues predominate over residues 14-30; that stretch reads FGGGKNPGIGNTSGAGS. Residues 31-48 are compositionally biased toward low complexity; it reads NGSASSNRGNSNGWSWSN. The span at 78–87 shows a compositional bias: gly residues; it reads GNSGNRGNNG. The next 2 helical transmembrane spans lie at 325–345 and 350–370; these read IIGGVVAGVAISLFGAVLSFL and LAVTALGVIGIMTISYLSSFI.

This sequence belongs to the channel forming colicin family.

The protein localises to the cell membrane. Its function is as follows. This colicin is a channel-forming colicin. This class of transmembrane toxins depolarize the cytoplasmic membrane, leading to dissipation of cellular energy. Functionally, colicins are polypeptide toxins produced by and active against E.coli and closely related bacteria. The chain is Colicin-N (cna) from Escherichia coli.